The primary structure comprises 157 residues: uncharacterized protein (157 aa).

The N-acetyltransferase domain occupies 9–146 (LLINYKTLDE…GDFYVWHPET (138 aa)).

This is an uncharacterized protein from Bacillus cereus (strain AH187).